Here is a 278-residue protein sequence, read N- to C-terminus: 4-deoxy-L-threo-5-hexosulose-uronate ketol-isomerase (278 aa).

Zn(2+) is bound by residues H196, H198, E203, and H245.

It belongs to the KduI family. Zn(2+) serves as cofactor.

It catalyses the reaction 5-dehydro-4-deoxy-D-glucuronate = 3-deoxy-D-glycero-2,5-hexodiulosonate. Its pathway is glycan metabolism; pectin degradation; 2-dehydro-3-deoxy-D-gluconate from pectin: step 4/5. Its function is as follows. Catalyzes the isomerization of 5-dehydro-4-deoxy-D-glucuronate to 3-deoxy-D-glycero-2,5-hexodiulosonate. In Yersinia pestis bv. Antiqua (strain Antiqua), this protein is 4-deoxy-L-threo-5-hexosulose-uronate ketol-isomerase.